The following is a 1019-amino-acid chain: Macrophage colony-stimulating factor 1 receptor 2 (1019 aa).

Residues 1–18 (MKSYCLLLSITLSCCCSA) form the signal peptide. Over 19-576 (EDLPDPPSIH…LREHNSAFMS (558 aa)) the chain is Extracellular. Ig-like C2-type domains lie at 37–109 (QAEA…IHLY), 106–212 (IHLY…LLVA), and 224–312 (QNKA…LIVL). A disulfide bond links Cys52 and Cys92. N-linked (GlcNAc...) asparagine glycosylation is found at Asn96, Asn148, Asn169, Asn249, Asn342, Asn346, Asn355, Asn369, Asn379, Asn408, Asn422, Asn429, Asn433, and Asn514. Intrachain disulfides connect Cys139–Cys193 and Cys239–Cys294. Ig-like C2-type domains are found at residues 383–474 (STTV…LRIY) and 487–567 (TLTC…VFHL). The cysteines at positions 490 and 552 are disulfide-linked. A helical membrane pass occupies residues 577–597 (ALIGAGSTAAILFLLLLVVFY). The Cytoplasmic portion of the chain corresponds to 598-1019 (KWRQKPKYEI…LSVTNIYQLS (422 aa)). A regulatory juxtamembrane domain region spans residues 601–633 (QKPKYEIRWKIIESTEGNHYTFVDPTLLPYNYK). Position 620 is a phosphotyrosine; by autocatalysis (Tyr620). Residues 641 to 963 (LRLGAVLGSG…MICQLIDRLL (323 aa)) form the Protein kinase domain. ATP contacts are provided by residues 647–655 (LGSGAFGKV) and Lys674. Phosphotyrosine; by autocatalysis is present on residues Tyr756 and Tyr778. Asp827 serves as the catalytic Proton acceptor. Positions 845–867 (DFGLARDIQNDDSYIVQGNARLP) are activation loop. A phosphotyrosine; by autocatalysis mark is found at Tyr858 and Tyr974. The segment at 970 to 1001 (NHQSYSNINETKKDDFKGGKSQRRGEEEEQRR) is disordered. The segment covering 979-1001 (ETKKDDFKGGKSQRRGEEEEQRR) has biased composition (basic and acidic residues). Tyr1016 carries the phosphotyrosine; by autocatalysis modification.

This sequence belongs to the protein kinase superfamily. Tyr protein kinase family. CSF-1/PDGF receptor subfamily. In terms of assembly, monomer. Homodimer. Interacts with CSF1. Autophosphorylated in response to CSF1 binding. autophosphorylation, leading to its degradation. Post-translationally, ubiquitinated. Becomes rapidly polyubiquitinated after autophosphorylation, leading to its degradation.

The protein resides in the cell membrane. The catalysed reaction is L-tyrosyl-[protein] + ATP = O-phospho-L-tyrosyl-[protein] + ADP + H(+). Present in an inactive conformation in the absence of bound ligand. CSF1 binding leads to dimerization and activation by autophosphorylation on tyrosine residues. In terms of biological role, tyrosine-protein kinase that acts as a cell-surface receptor for CSF1 and plays an essential role in the regulation of survival, proliferation and differentiation of hematopoietic precursor cells, especially mononuclear phagocytes, such as macrophages and monocytes. Plays an important role in innate immunity and in inflammatory processes. Plays an important role in the regulation of osteoclast proliferation and differentiation, the regulation of bone resorption, and is required for normal bone development. Promotes reorganization of the actin cytoskeleton, regulates formation of membrane ruffles, cell adhesion and cell migration. Activates several signaling pathways in response to ligand binding. This Takifugu rubripes (Japanese pufferfish) protein is Macrophage colony-stimulating factor 1 receptor 2 (csf1r2).